The primary structure comprises 166 residues: EEF1A lysine methyltransferase 1 (166 aa).

This sequence belongs to the class I-like SAM-binding methyltransferase superfamily. EFM5 family.

It localises to the cytoplasm. It carries out the reaction L-lysyl-[protein] + 3 S-adenosyl-L-methionine = N(6),N(6),N(6)-trimethyl-L-lysyl-[protein] + 3 S-adenosyl-L-homocysteine + 3 H(+). Protein-lysine methyltransferase that selectively catalyzes the trimethylation of EEF1A at 'Lys-79'. The polypeptide is EEF1A lysine methyltransferase 1 (Danio rerio (Zebrafish)).